The chain runs to 1001 residues: Serine/threonine-protein kinase TAO1-B (1001 aa).

One can recognise a Protein kinase domain in the interval 28–281 (FSDLREIGHG…SDELLKHMFV (254 aa)). Residues 34-42 (IGHGSFGAV) and lysine 57 contribute to the ATP site. The active-site Proton acceptor is the aspartate 151. Disordered regions lie at residues 324-435 (PAVE…YRNR) and 567-586 (KEEL…EWLS). Low complexity predominate over residues 350–370 (SNQSIPSMSISASSQSSSVNS). Composition is skewed to basic and acidic residues over residues 375 to 388 (SDDK…EGDH) and 577 to 586 (PKKEKQEWLS). 2 coiled-coil regions span residues 458–651 (SELR…EHAM) and 754–877 (KAVL…EIEA). A disordered region spans residues 911-1001 (SHNPTGGPGP…ISNGSHMSYT (91 aa)). The segment covering 921–930 (HWGHPMAGPP) has biased composition (low complexity). 2 stretches are compositionally biased toward polar residues: residues 949-967 (GSVQ…NSPQ) and 975-1001 (GGRT…MSYT).

It belongs to the protein kinase superfamily. STE Ser/Thr protein kinase family. STE20 subfamily.

It is found in the cytoplasm. The catalysed reaction is L-seryl-[protein] + ATP = O-phospho-L-seryl-[protein] + ADP + H(+). It carries out the reaction L-threonyl-[protein] + ATP = O-phospho-L-threonyl-[protein] + ADP + H(+). Its function is as follows. Serine/threonine-protein kinase involved in various processes such as p38/mapk14 stress-activated MAPK cascade, DNA damage response and regulation of cytoskeleton stability. Acts as an activator of the p38/MAPK14 stress-activated MAPK cascade by mediating phosphorylation and subsequent activation of upstream MAP kinase kinases. In response to DNA damage, involved in the G2/M transition DNA damage checkpoint by activating the p38/MAPK14 stress-activated MAPK cascade. The sequence is that of Serine/threonine-protein kinase TAO1-B (taok1-b) from Xenopus laevis (African clawed frog).